The following is a 255-amino-acid chain: Small ribosomal subunit protein uS2 (255 aa).

The interval 233–255 (DFVAEEAASEESLEELAEIVEGK) is disordered.

Belongs to the universal ribosomal protein uS2 family.

The sequence is that of Small ribosomal subunit protein uS2 (rpsB) from Lactococcus lactis subsp. lactis (strain IL1403) (Streptococcus lactis).